We begin with the raw amino-acid sequence, 433 residues long: tRNA-2-methylthio-N(6)-dimethylallyladenosine synthase (433 aa).

An MTTase N-terminal domain is found at Lys-3–Ala-118. [4Fe-4S] cluster is bound by residues Cys-12, Cys-49, Cys-81, Cys-150, Cys-154, and Cys-157. A Radical SAM core domain is found at Ser-136–Glu-369. One can recognise a TRAM domain in the interval Gln-372–Leu-433.

It belongs to the methylthiotransferase family. MiaB subfamily. Monomer. [4Fe-4S] cluster is required as a cofactor.

It localises to the cytoplasm. It carries out the reaction N(6)-dimethylallyladenosine(37) in tRNA + (sulfur carrier)-SH + AH2 + 2 S-adenosyl-L-methionine = 2-methylsulfanyl-N(6)-dimethylallyladenosine(37) in tRNA + (sulfur carrier)-H + 5'-deoxyadenosine + L-methionine + A + S-adenosyl-L-homocysteine + 2 H(+). Its function is as follows. Catalyzes the methylthiolation of N6-(dimethylallyl)adenosine (i(6)A), leading to the formation of 2-methylthio-N6-(dimethylallyl)adenosine (ms(2)i(6)A) at position 37 in tRNAs that read codons beginning with uridine. In Wolinella succinogenes (strain ATCC 29543 / DSM 1740 / CCUG 13145 / JCM 31913 / LMG 7466 / NCTC 11488 / FDC 602W) (Vibrio succinogenes), this protein is tRNA-2-methylthio-N(6)-dimethylallyladenosine synthase.